The primary structure comprises 342 residues: NLP effector protein Pc107869 (342 aa).

Residues 1–19 (MKTGFFLFAACAALVAVQA) form the signal peptide. Asparagine 24 carries an N-linked (GlcNAc...) asparagine glycan. The tract at residues 41–125 (APRTKAPPTK…PTPDPGPWEA (85 aa)) is disordered. The span at 55–75 (QQSSLSGSQEQQQEQIETPAP) shows a compositional bias: low complexity. Residues 93 to 121 (TPAPTPAPTPAPTPAPTPAPTPAPTPDPG) show a composition bias toward pro residues. The short motif at 226-232 (GHRHDWE) is the Hepta-peptide GHRHDWE motif element.

Belongs to the Necrosis inducing protein (NPP1) family.

It localises to the secreted. In terms of biological role, secreted effector that contributes strongly to virulence during infection by P.capsici. Induces cell death in the Solanaceae, including Nicotiana benthamiana. The chain is NLP effector protein Pc107869 from Phytophthora capsici.